Consider the following 1382-residue polypeptide: Eukaryotic translation initiation factor 3 subunit A (1382 aa).

The residue at position 68 (lysine 68) is an N6-acetyllysine. The stretch at 82–120 (NIKSLEDVVRAYLKMAEEKTEAAKEESQQMVLDIEDLDN) forms a coiled coil. One can recognise a PCI domain in the interval 315-498 (MQRMSTRVLL…RTLSFGSDLN (184 aa)). Serine 492 and serine 584 each carry phosphoserine. An interaction with EIF3B region spans residues 664–835 (LDPDFIMAKQ…REERERAERA (172 aa)). Disordered stretches follow at residues 810–844 (KEEEEQRRAEEQMLKEREERERAERAKREEELREY) and 866–1382 (EERE…TVRR). Basic and acidic residues-rich tracts occupy residues 866–1165 (EERE…DDSR), 1177–1328 (GWRE…DPPR), and 1336–1371 (SRDRERDRDREREGEKEKASWRAEKDRESLRRTKNE). Residues serine 881, serine 882, and serine 895 each carry the phosphoserine modification. Repeat 1 spans residues 925 to 934 (DEDRSHRRDE). A 25 X 10 AA approximate tandem repeats of [DE]-[DE]-[DE]-R-[SEVGFPILV]-[HPSN]-[RSW]-[RL]-[DRGTIHN]-[EPMANLGDT] region spans residues 925–1172 (DEDRSHRRDE…DSRPGPWRPL (248 aa)). The stretch at 935–942 (ERPRRLGD) is one 2; truncated repeat. 20 repeat units span residues 943-952 (DEDREPSLRP), 953-962 (DDDRVPRRGM), 963-972 (DDDRGPRRGP), 973-982 (EEDRFSRRGA), 983-992 (DDDRPSWRNT), 993-1002 (DDDRPPRRIA), 1003-1012 (DEDRGNWRHA), 1013-1022 (DDDRPPRRGL), 1023-1032 (DEDRGSWRTA), 1033-1042 (DEDRGPRRGM), 1043-1052 (DDDRGPRRGG), 1054-1063 (DDERSSWRNA), 1064-1073 (DDDRGPRRGL), 1074-1083 (DDDRGPRRGM), 1084-1093 (DDDRGPRRGM), 1094-1103 (DDDRGPRRGM), 1104-1113 (DDDRGPRRGL), 1114-1123 (DDDRGPWRNA), 1124-1133 (DDDRIPRRGA), and 1134-1143 (EDDRGPWRNM). Residue serine 949 is modified to Phosphoserine. Serine 1028 is subject to Phosphoserine. Residues 1144–1152 (DDDRLSRRA) form a 23; truncated repeat. The stretch at 1153–1162 (DDDRFPRRGD) is repeat 24. The stretch at 1163–1172 (DSRPGPWRPL) is one 25; approximate repeat. A phosphoserine mark is found at serine 1188, serine 1198, serine 1262, serine 1336, and serine 1364.

In terms of assembly, interacts with EIF4G1. Component of the eukaryotic translation initiation factor 3 (eIF-3) complex, which is composed of 13 subunits: EIF3A, EIF3B, EIF3C, EIF3D, EIF3E, EIF3F, EIF3G, EIF3H, EIF3I, EIF3J, EIF3K, EIF3L and EIF3M. The eIF-3 complex appears to include 3 stable modules: module A is composed of EIF3A, EIF3B, EIF3G and EIF3I; module B is composed of EIF3F, EIF3H, and EIF3M; and module C is composed of EIF3C, EIF3D, EIF3E, EIF3L and EIF3K. EIF3C of module C binds EIF3B of module A and EIF3H of module B, thereby linking the three modules. EIF3J is a labile subunit that binds to the eIF-3 complex via EIF3B. The eIF-3 complex interacts with RPS6KB1 under conditions of nutrient depletion. Mitogenic stimulation leads to binding and activation of a complex composed of MTOR and RPTOR, leading to phosphorylation and release of RPS6KB1 and binding of EIF4B to eIF-3. Also interacts with KRT7 and PIWIL2. Post-translationally, phosphorylated. Phosphorylation is enhanced upon serum stimulation.

Its subcellular location is the cytoplasm. Functionally, RNA-binding component of the eukaryotic translation initiation factor 3 (eIF-3) complex, which is required for several steps in the initiation of protein synthesis. The eIF-3 complex associates with the 40S ribosome and facilitates the recruitment of eIF-1, eIF-1A, eIF-2:GTP:methionyl-tRNAi and eIF-5 to form the 43S pre-initiation complex (43S PIC). The eIF-3 complex stimulates mRNA recruitment to the 43S PIC and scanning of the mRNA for AUG recognition. The eIF-3 complex is also required for disassembly and recycling of post-termination ribosomal complexes and subsequently prevents premature joining of the 40S and 60S ribosomal subunits prior to initiation. The eIF-3 complex specifically targets and initiates translation of a subset of mRNAs involved in cell proliferation, including cell cycling, differentiation and apoptosis, and uses different modes of RNA stem-loop binding to exert either translational activation or repression. Its function is as follows. (Microbial infection) Essential for the initiation of translation on type-1 viral ribosomal entry sites (IRESs), like for HCV, PV, EV71 or BEV translation. (Microbial infection) In case of FCV infection, plays a role in the ribosomal termination-reinitiation event leading to the translation of VP2. This is Eukaryotic translation initiation factor 3 subunit A from Homo sapiens (Human).